The primary structure comprises 484 residues: Hexokinase-2 (484 aa).

Residues 21–467 (PQLLEALKPI…SGVGAAVIAA (447 aa)) enclose the Hexokinase domain. Residues 75 to 208 (TGKETGSYLA…GVPIDVVALI (134 aa)) are hexokinase small subdomain. Positions 209-456 (NDTTGTLVAS…DPIIIVPAED (248 aa)) are hexokinase large subdomain.

The protein belongs to the hexokinase family. Monomer.

The protein resides in the cytoplasm. It catalyses the reaction a D-hexose + ATP = a D-hexose 6-phosphate + ADP + H(+). The enzyme catalyses D-fructose + ATP = D-fructose 6-phosphate + ADP + H(+). The catalysed reaction is D-glucose + ATP = D-glucose 6-phosphate + ADP + H(+). The protein operates within carbohydrate metabolism; hexose metabolism. It participates in carbohydrate degradation; glycolysis; D-glyceraldehyde 3-phosphate and glycerone phosphate from D-glucose: step 1/4. Functionally, catalyzes the phosphorylation of hexose, such as D-glucose and D-fructose, to hexose 6-phosphate (D-glucose 6-phosphate and D-fructose 6-phosphate, respectively). Mediates the initial step of glycolysis by catalyzing phosphorylation of D-glucose to D-glucose 6-phosphate. The protein is Hexokinase-2 (HXK2) of Candida albicans (strain SC5314 / ATCC MYA-2876) (Yeast).